Reading from the N-terminus, the 241-residue chain is Zinc finger CCHC domain-containing protein 17 (241 aa).

One can recognise an S1 motif domain in the interval 16 to 88 (YTIFQGEVAM…DRIKVSLSMK (73 aa)). Position 114 is a phosphoserine (Ser-114). A CCHC-type zinc finger spans residues 131 to 148 (TTCKKCGCKGHFAKDCFM). Lys-144 carries the post-translational modification N6-acetyllysine. The tract at residues 161–241 (EEEEKEEAKS…KKKHKKKHKE (81 aa)) is disordered. Residues 166–178 (EEAKSAEFEKPDP) show a composition bias toward basic and acidic residues. The segment covering 182–198 (PSRKRKKEKKKKKHRDR) has biased composition (basic residues). A Phosphoserine modification is found at Ser-183. Over residues 211 to 225 (DTGKRARHTSKDSKA) the composition is skewed to basic and acidic residues. Over residues 226–241 (AKKKKKKKKHKKKHKE) the composition is skewed to basic residues.

Interacts with PNN. Associates with the 60S ribosomal subunit.

The protein resides in the nucleus. It is found in the nucleolus. The polypeptide is Zinc finger CCHC domain-containing protein 17 (ZCCHC17) (Homo sapiens (Human)).